Consider the following 220-residue polypeptide: Small ribosomal subunit protein uS3 (220 aa).

Positions 38-106 constitute a KH type-2 domain; it reads IRKYVKGRLK…RVHININEIK (69 aa).

It belongs to the universal ribosomal protein uS3 family. As to quaternary structure, part of the 30S ribosomal subunit. Forms a tight complex with proteins S10 and S14.

Binds the lower part of the 30S subunit head. Binds mRNA in the 70S ribosome, positioning it for translation. The protein is Small ribosomal subunit protein uS3 of Brevibacillus brevis (strain 47 / JCM 6285 / NBRC 100599).